Here is a 287-residue protein sequence, read N- to C-terminus: Pyridoxal 5'-phosphate synthase subunit PdxS (287 aa).

Residue aspartate 21 coordinates D-ribose 5-phosphate. Lysine 78 serves as the catalytic Schiff-base intermediate with D-ribose 5-phosphate. D-ribose 5-phosphate is bound at residue glycine 150. Arginine 162 is a binding site for D-glyceraldehyde 3-phosphate. D-ribose 5-phosphate contacts are provided by residues glycine 211 and 232 to 233 (GS).

The protein belongs to the PdxS/SNZ family. In terms of assembly, in the presence of PdxT, forms a dodecamer of heterodimers.

It carries out the reaction aldehydo-D-ribose 5-phosphate + D-glyceraldehyde 3-phosphate + L-glutamine = pyridoxal 5'-phosphate + L-glutamate + phosphate + 3 H2O + H(+). The protein operates within cofactor biosynthesis; pyridoxal 5'-phosphate biosynthesis. In terms of biological role, catalyzes the formation of pyridoxal 5'-phosphate from ribose 5-phosphate (RBP), glyceraldehyde 3-phosphate (G3P) and ammonia. The ammonia is provided by the PdxT subunit. Can also use ribulose 5-phosphate and dihydroxyacetone phosphate as substrates, resulting from enzyme-catalyzed isomerization of RBP and G3P, respectively. The chain is Pyridoxal 5'-phosphate synthase subunit PdxS from Tropheryma whipplei (strain Twist) (Whipple's bacillus).